We begin with the raw amino-acid sequence, 344 residues long: UDP-3-O-acylglucosamine N-acyltransferase (344 aa).

The active-site Proton acceptor is the His-248.

The protein belongs to the transferase hexapeptide repeat family. LpxD subfamily. Homotrimer.

The catalysed reaction is a UDP-3-O-[(3R)-3-hydroxyacyl]-alpha-D-glucosamine + a (3R)-hydroxyacyl-[ACP] = a UDP-2-N,3-O-bis[(3R)-3-hydroxyacyl]-alpha-D-glucosamine + holo-[ACP] + H(+). It functions in the pathway bacterial outer membrane biogenesis; LPS lipid A biosynthesis. Functionally, catalyzes the N-acylation of UDP-3-O-acylglucosamine using 3-hydroxyacyl-ACP as the acyl donor. Is involved in the biosynthesis of lipid A, a phosphorylated glycolipid that anchors the lipopolysaccharide to the outer membrane of the cell. This is UDP-3-O-acylglucosamine N-acyltransferase from Prochlorococcus marinus subsp. pastoris (strain CCMP1986 / NIES-2087 / MED4).